A 663-amino-acid polypeptide reads, in one-letter code: Translation factor GUF1, mitochondrial (663 aa).

Residues 1–37 constitute a mitochondrion transit peptide; the sequence is MRGCLQSVRLLTTALGQSPRRPLPFAFRLPPNASRLF. The tr-type G domain occupies 65–245; the sequence is ERYRNFCIVA…TIVEQIPAPI (181 aa). Residues 74–81, 138–142, and 192–195 contribute to the GTP site; these read AHVDHGKS, DTPGH, and NKVD.

The protein belongs to the TRAFAC class translation factor GTPase superfamily. Classic translation factor GTPase family. LepA subfamily.

Its subcellular location is the mitochondrion inner membrane. The enzyme catalyses GTP + H2O = GDP + phosphate + H(+). Its function is as follows. Promotes mitochondrial protein synthesis. May act as a fidelity factor of the translation reaction, by catalyzing a one-codon backward translocation of tRNAs on improperly translocated ribosomes. Binds to mitochondrial ribosomes in a GTP-dependent manner. The chain is Translation factor GUF1, mitochondrial from Uncinocarpus reesii (strain UAMH 1704).